The sequence spans 600 residues: Proline--tRNA ligase (600 aa).

This sequence belongs to the class-II aminoacyl-tRNA synthetase family. ProS type 1 subfamily. Homodimer.

The protein localises to the cytoplasm. The catalysed reaction is tRNA(Pro) + L-proline + ATP = L-prolyl-tRNA(Pro) + AMP + diphosphate. Its function is as follows. Catalyzes the attachment of proline to tRNA(Pro) in a two-step reaction: proline is first activated by ATP to form Pro-AMP and then transferred to the acceptor end of tRNA(Pro). As ProRS can inadvertently accommodate and process non-cognate amino acids such as alanine and cysteine, to avoid such errors it has two additional distinct editing activities against alanine. One activity is designated as 'pretransfer' editing and involves the tRNA(Pro)-independent hydrolysis of activated Ala-AMP. The other activity is designated 'posttransfer' editing and involves deacylation of mischarged Ala-tRNA(Pro). The misacylated Cys-tRNA(Pro) is not edited by ProRS. This Prochlorococcus marinus (strain MIT 9515) protein is Proline--tRNA ligase.